Consider the following 356-residue polypeptide: 5-formaminoimidazole-4-carboxamide-1-(beta)-D-ribofuranosyl 5'-monophosphate synthetase (356 aa).

Residues His-27 and Ser-94 each coordinate 5-amino-1-(5-phospho-beta-D-ribosyl)imidazole-4-carboxamide. The ATP-grasp domain maps to 101 to 333; sequence TENFADMAVP…YADLMEENLS (233 aa). ATP is bound by residues 145–196 and Glu-226; that span reads PHDI…TRYY. Asn-255 serves as a coordination point for 5-amino-1-(5-phospho-beta-D-ribosyl)imidazole-4-carboxamide. Mg(2+) contacts are provided by Glu-293 and Glu-306.

The protein belongs to the phosphohexose mutase family. Mg(2+) serves as cofactor. The cofactor is Mn(2+).

The catalysed reaction is 5-amino-1-(5-phospho-beta-D-ribosyl)imidazole-4-carboxamide + formate + ATP = 5-formamido-1-(5-phospho-D-ribosyl)imidazole-4-carboxamide + ADP + phosphate. It functions in the pathway purine metabolism; IMP biosynthesis via de novo pathway; 5-formamido-1-(5-phospho-D-ribosyl)imidazole-4-carboxamide from 5-amino-1-(5-phospho-D-ribosyl)imidazole-4-carboxamide (formate route): step 1/1. Functionally, catalyzes the ATP- and formate-dependent formylation of 5-aminoimidazole-4-carboxamide-1-beta-d-ribofuranosyl 5'-monophosphate (AICAR) to 5-formaminoimidazole-4-carboxamide-1-beta-d-ribofuranosyl 5'-monophosphate (FAICAR) in the absence of folates. This is 5-formaminoimidazole-4-carboxamide-1-(beta)-D-ribofuranosyl 5'-monophosphate synthetase from Methanosarcina barkeri (strain Fusaro / DSM 804).